A 459-amino-acid polypeptide reads, in one-letter code: tRNA modification GTPase MnmE (459 aa).

(6S)-5-formyl-5,6,7,8-tetrahydrofolate is bound by residues Arg-22, Glu-85, and Arg-124. The TrmE-type G domain occupies 221-380 (GLSTVIVGKP…LEIQIRDLFF (160 aa)). Residue Asn-231 coordinates K(+). Residues 231-236 (NVGKSS), 250-256 (TEVAGTT), and 275-278 (DTAG) each bind GTP. Mg(2+) is bound at residue Ser-235. Residues Thr-250, Val-252, and Thr-255 each coordinate K(+). A Mg(2+)-binding site is contributed by Thr-256. (6S)-5-formyl-5,6,7,8-tetrahydrofolate is bound at residue Lys-459.

The protein belongs to the TRAFAC class TrmE-Era-EngA-EngB-Septin-like GTPase superfamily. TrmE GTPase family. As to quaternary structure, homodimer. Heterotetramer of two MnmE and two MnmG subunits. K(+) is required as a cofactor.

It localises to the cytoplasm. Functionally, exhibits a very high intrinsic GTPase hydrolysis rate. Involved in the addition of a carboxymethylaminomethyl (cmnm) group at the wobble position (U34) of certain tRNAs, forming tRNA-cmnm(5)s(2)U34. This Staphylococcus aureus (strain MSSA476) protein is tRNA modification GTPase MnmE.